We begin with the raw amino-acid sequence, 250 residues long: 2,3-bisphosphoglycerate-dependent phosphoglycerate mutase (250 aa).

Substrate contacts are provided by residues 10 to 17, 23 to 24, Arg-62, 89 to 92, Lys-100, 116 to 117, and 185 to 186; these read RHGESQWN, TG, ERHY, RR, and GN. The active-site Tele-phosphohistidine intermediate is His-11. Glu-89 acts as the Proton donor/acceptor in catalysis.

The protein belongs to the phosphoglycerate mutase family. BPG-dependent PGAM subfamily. Homodimer.

The catalysed reaction is (2R)-2-phosphoglycerate = (2R)-3-phosphoglycerate. It functions in the pathway carbohydrate degradation; glycolysis; pyruvate from D-glyceraldehyde 3-phosphate: step 3/5. Functionally, catalyzes the interconversion of 2-phosphoglycerate and 3-phosphoglycerate. This Salmonella paratyphi A (strain ATCC 9150 / SARB42) protein is 2,3-bisphosphoglycerate-dependent phosphoglycerate mutase.